The sequence spans 91 residues: Small ribosomal subunit protein uS19 (91 aa).

The protein belongs to the universal ribosomal protein uS19 family.

Its function is as follows. Protein S19 forms a complex with S13 that binds strongly to the 16S ribosomal RNA. This Bordetella petrii (strain ATCC BAA-461 / DSM 12804 / CCUG 43448) protein is Small ribosomal subunit protein uS19.